The primary structure comprises 119 residues: Integration host factor subunit alpha (119 aa).

Positions 96 to 119 are disordered; sequence INGQQGSGKMNGEASHEQLSAEPE.

This sequence belongs to the bacterial histone-like protein family. In terms of assembly, heterodimer of an alpha and a beta chain.

Functionally, this protein is one of the two subunits of integration host factor, a specific DNA-binding protein that functions in genetic recombination as well as in transcriptional and translational control. This chain is Integration host factor subunit alpha, found in Bradyrhizobium sp. (strain BTAi1 / ATCC BAA-1182).